Reading from the N-terminus, the 297-residue chain is MKRPDYRTLQALDAVIRERGFERAAQKLCITQSAVSQRIKQLENMFGQPLLVRTVPPRPTEQGQKLLALLRQVELLEEEWLGDEQTGSTPLLLSLAVNADSLATWLLPALAPVLADSPIRLNLQVEDETRTQERLRRGEVVGAVSIQHQALPSCLVDKLGALDYLFVASKPFAERYFPNGVTRSSLLKAPAVAFDHLDDMHQAFLQQNFDLPPGSVPCHIVNSSEAFVQLARQGTTCCMIPHLQIEKELESGELINLTPGLLQRRMLYWHRFAPESRMMRKVTDALLEYGHKVLRQD.

One can recognise an HTH lysR-type domain in the interval 4 to 60; sequence PDYRTLQALDAVIRERGFERAAQKLCITQSAVSQRIKQLENMFGQPLLVRTVPPRPT. The H-T-H motif DNA-binding region spans 21 to 40; sequence FERAAQKLCITQSAVSQRIK.

The protein belongs to the LysR transcriptional regulatory family. In terms of assembly, homodimer.

Functionally, controls the transcription of genes involved in arginine and lysine metabolism. The sequence is that of HTH-type transcriptional regulator ArgP from Salmonella choleraesuis (strain SC-B67).